Here is a 323-residue protein sequence, read N- to C-terminus: MFGLQMSVATSDMNGSDPGQPGQRPAAVLIAGPTASGKSALALRLAQARDGVVINTDSMQMYRDLRIITARPTAEEEALAAHRLYGSVDAAVNFSAGAYVEAAAGALAEARAAGRLPIFVGGTGLYFKALTRGLSAVPPVAAEVRDAVRLRLDRDGVLALHAELARHDPAGAARLAPADRSRIARALEVVLATGRPLADWHNQASPPLLPPEGFVAMFLAPEREALYGRIDARFAAMLQAGALEEVAALAARNLDPLLPAMKAHGVPALIRHFRGELSLEEAAAIGAADTRHYAKRQFTWFRHQLPEFRWVTPEQAESGLLGT.

Residue 32–39 participates in ATP binding; sequence GPTASGKS. Residue 34–39 coordinates substrate; sequence TASGKS. An interaction with substrate tRNA region spans residues 57-60; the sequence is DSMQ.

This sequence belongs to the IPP transferase family. As to quaternary structure, monomer. Mg(2+) is required as a cofactor.

It carries out the reaction adenosine(37) in tRNA + dimethylallyl diphosphate = N(6)-dimethylallyladenosine(37) in tRNA + diphosphate. In terms of biological role, catalyzes the transfer of a dimethylallyl group onto the adenine at position 37 in tRNAs that read codons beginning with uridine, leading to the formation of N6-(dimethylallyl)adenosine (i(6)A). This Rhodopseudomonas palustris (strain BisB5) protein is tRNA dimethylallyltransferase.